The following is a 422-amino-acid chain: MDKLLINGGKALHGEVVISGAKNAALPIMAASLLASDHVTISNVPHLKDITTMMELLGQLGAHLIVDEKMNVQVDSSQVNEFVAPYDLVKTMRASILVLGPMLARFGKADVSLPGGCAIGTRPVDLHLKALRAMGADITVKNGYINARCKKGCLQGKRLMFDTVTVTGTENVLMAAVLAEGITTIKNAAREPEVVDLANFLIQMGAKIRGAGTSTIEVEGVESLNGGTYSVMSDRIEAGTYLAAGALTRGQVTVKKVRPDTLLSQLCKFEEAGAELTIGEDWVSLNMHNKRPQAVNISTAPYPAFATDMQAQFMAMNSVAEGSSTIIETIFENRFMHVQELQRMGANIQLNGNTAIVHGVEKLTGAPVMATDLRASASLILAGLVAEGETVVERIYHVDRGYERIEEKLSLLGADIKRVSDR.

22 to 23 (KN) contacts phosphoenolpyruvate. Arginine 93 contacts UDP-N-acetyl-alpha-D-glucosamine. Residue cysteine 117 is the Proton donor of the active site. 2-(S-cysteinyl)pyruvic acid O-phosphothioketal is present on cysteine 117. UDP-N-acetyl-alpha-D-glucosamine-binding positions include 122-126 (RPVDL), aspartate 308, and isoleucine 330.

It belongs to the EPSP synthase family. MurA subfamily.

The protein resides in the cytoplasm. The enzyme catalyses phosphoenolpyruvate + UDP-N-acetyl-alpha-D-glucosamine = UDP-N-acetyl-3-O-(1-carboxyvinyl)-alpha-D-glucosamine + phosphate. It functions in the pathway cell wall biogenesis; peptidoglycan biosynthesis. Cell wall formation. Adds enolpyruvyl to UDP-N-acetylglucosamine. This Legionella pneumophila (strain Paris) protein is UDP-N-acetylglucosamine 1-carboxyvinyltransferase.